Reading from the N-terminus, the 96-residue chain is Auxin-responsive protein SAUR29 (96 aa).

This sequence belongs to the ARG7 family.

Its subcellular location is the cell membrane. Its function is as follows. Functions as a positive effector of cell expansion through modulation of auxin transport. Involved in thermo-responsiveness of plant architecture. Enhances plasma membrane H(+)-ATPase. The sequence is that of Auxin-responsive protein SAUR29 from Arabidopsis thaliana (Mouse-ear cress).